The sequence spans 231 residues: Octanoyl-[acyl-carrier-protein]:protein N-octanoyltransferase LIPT2, mitochondrial (231 aa).

The BPL/LPL catalytic domain occupies 41-224 (GTKAGVLLVC…AFKETFKCTL (184 aa)). Lysine 43 is subject to N6-succinyllysine. Residues 85-92 (RGGLATFH), 154-156 (AIG), and 167-169 (GLA) each bind substrate. Catalysis depends on cysteine 185, which acts as the Acyl-thioester intermediate.

This sequence belongs to the LipB family.

The protein resides in the mitochondrion. It catalyses the reaction octanoyl-[ACP] + L-lysyl-[protein] = N(6)-octanoyl-L-lysyl-[protein] + holo-[ACP] + H(+). It participates in protein modification; protein lipoylation via endogenous pathway; protein N(6)-(lipoyl)lysine from octanoyl-[acyl-carrier-protein]: step 1/2. Its function is as follows. Catalyzes the transfer of endogenously produced octanoic acid from octanoyl-acyl-carrier-protein onto the lipoyl domains of lipoate-dependent enzymes such as the protein H of the glycine cleavage system (GCSH). Lipoyl-ACP can also act as a substrate although octanoyl-ACP is likely to be the physiological substrate. This chain is Octanoyl-[acyl-carrier-protein]:protein N-octanoyltransferase LIPT2, mitochondrial, found in Mus musculus (Mouse).